The following is a 274-amino-acid chain: Proteasome subunit beta type-5-A (274 aa).

Positions 1 to 57 (MKLDTSGFETSMPMIGFGSSSDMLDELSSVPSFDLPRTKEFDGFQKKAKDMLKHAKG) are cleaved as a propeptide — removed in mature form. Catalysis depends on T58, which acts as the Nucleophile.

The protein belongs to the peptidase T1B family. In terms of assembly, component of the 20S core complex of the 26S proteasome. The 26S proteasome is composed of a core protease (CP), known as the 20S proteasome, capped at one or both ends by the 19S regulatory particle (RP/PA700). The 20S proteasome core is composed of 28 subunits that are arranged in four stacked rings, resulting in a barrel-shaped structure. The two end rings are each formed by seven alpha subunits, and the two central rings are each formed by seven beta subunits. The catalytic chamber with the active sites is on the inside of the barrel. In terms of tissue distribution, ubiquitous low levels, higher expression in siliques and flowers.

It is found in the cytoplasm. It localises to the nucleus. The enzyme catalyses Cleavage of peptide bonds with very broad specificity.. Its function is as follows. The proteasome is a multicatalytic proteinase complex which is characterized by its ability to cleave peptides with Arg, Phe, Tyr, Leu, and Glu adjacent to the leaving group at neutral or slightly basic pH. The proteasome has an ATP-dependent proteolytic activity. The polypeptide is Proteasome subunit beta type-5-A (PBE1) (Arabidopsis thaliana (Mouse-ear cress)).